Consider the following 640-residue polypeptide: Threonine--tRNA ligase (640 aa).

The TGS domain occupies 1 to 61 (MPIITLPDGS…ERDATLQIIT (61 aa)). Positions 242 to 533 (DHRRIGKQLD…LIEHYAGAFP (292 aa)) are catalytic. Zn(2+) is bound by residues C333, H384, and H510.

It belongs to the class-II aminoacyl-tRNA synthetase family. Homodimer. Requires Zn(2+) as cofactor.

The protein resides in the cytoplasm. The enzyme catalyses tRNA(Thr) + L-threonine + ATP = L-threonyl-tRNA(Thr) + AMP + diphosphate + H(+). Functionally, catalyzes the attachment of threonine to tRNA(Thr) in a two-step reaction: L-threonine is first activated by ATP to form Thr-AMP and then transferred to the acceptor end of tRNA(Thr). Also edits incorrectly charged L-seryl-tRNA(Thr). The polypeptide is Threonine--tRNA ligase (Pseudomonas paraeruginosa (strain DSM 24068 / PA7) (Pseudomonas aeruginosa (strain PA7))).